The sequence spans 192 residues: uncharacterized protein (192 aa).

The Nudix hydrolase domain occupies 29-160 (HRQAAVLIPI…PLDIYRRGDS (132 aa)). The Nudix box motif lies at 67-89 (GAVDDTDASVIAAALREAEEEVA). Residues glutamate 83 and glutamate 87 each coordinate Mg(2+).

It belongs to the Nudix hydrolase family. PCD1 subfamily. The cofactor is Mn(2+). It depends on Mg(2+) as a cofactor.

Functionally, probably mediates the hydrolysis of some nucleoside diphosphate derivatives. This is an uncharacterized protein from Shigella sonnei (strain Ss046).